Reading from the N-terminus, the 348-residue chain is MTAPSQVLKIRRPDDWHLHLRDGDMLKTVVPYTSEIYGRAIVMPNLAPPVTTVEAAVAYRQRILDAVPAGHNFTPLMTCYLTDSLDPNELERGFNEGVFTAAKLYPANATTNSSHGVTSIDAIMPVLERMEKIGMPLLVHGEVTHADIDIFDREAHFIESVMEPLRQRLTALKVVFEHITTKDAADYVHDGNERLAATITPQHLMFNRNHMLVGGVRPHLYCLPILKRNIHQQALRELVASGFNRVFLGTDSAPHARHRKESSCGCAGCFNAPTALGSYATVFEEMNALQHFEAFCSVNGPQFYGLPVNDTFIELVREEQQVAESIALTDDTLVPFLAGETVRWSVKQ.

Zn(2+) contacts are provided by histidine 17 and histidine 19. Residues 19 to 21 (HLR) and asparagine 45 contribute to the substrate site. Residues lysine 103, histidine 140, and histidine 178 each coordinate Zn(2+). An N6-carboxylysine modification is found at lysine 103. Histidine 140 provides a ligand contact to substrate. Leucine 223 is a substrate binding site. Aspartate 251 is a binding site for Zn(2+). The active site involves aspartate 251. Positions 255 and 267 each coordinate substrate.

Belongs to the metallo-dependent hydrolases superfamily. DHOase family. Class II DHOase subfamily. Homodimer. Zn(2+) is required as a cofactor.

The enzyme catalyses (S)-dihydroorotate + H2O = N-carbamoyl-L-aspartate + H(+). It functions in the pathway pyrimidine metabolism; UMP biosynthesis via de novo pathway; (S)-dihydroorotate from bicarbonate: step 3/3. Catalyzes the reversible cyclization of carbamoyl aspartate to dihydroorotate. This is Dihydroorotase from Shigella boydii serotype 18 (strain CDC 3083-94 / BS512).